The following is a 551-amino-acid chain: E3 ubiquitin-protein ligase TRIM8 (551 aa).

Residues Cys15–Asn56 form an RING-type zinc finger. 2 B box-type zinc fingers span residues Cys92–His132 and Val140–Val182. Coiled-coil stretches lie at residues Asp181–Gln249 and Glu274–Asp295. Positions Gln399–Leu457 are disordered. 2 stretches are compositionally biased toward polar residues: residues Thr405–His424 and Tyr446–Met456.

It belongs to the TRIM/RBCC family. Homodimer. Interacts with SOCS1 (via) SH2 domain and SOCS box. Interacts with HSP90AB1; prevents nucleus translocation of phosphorylated STAT3 and HSP90AB1. Interacts with MAP3K7/TAK1. Interacts with PIAS3. Interacts with TICAM1. Interacts with TRIM15; this interaction prevents TRIM8 cytoplasmic translocation. High expression in heart, liver, and thymus. Expressed in embryonic CNS, kidney, lens and gut.

The enzyme catalyses S-ubiquitinyl-[E2 ubiquitin-conjugating enzyme]-L-cysteine + [acceptor protein]-L-lysine = [E2 ubiquitin-conjugating enzyme]-L-cysteine + N(6)-ubiquitinyl-[acceptor protein]-L-lysine.. It participates in protein modification; protein ubiquitination. In terms of biological role, E3 ubiquitin-protein ligase that participates in multiple biological processes including cell survival, differentiation, apoptosis, and in particular, the innate immune response. Participates in the activation of interferon-gamma signaling by promoting proteasomal degradation of the repressor SOCS1. Plays a positive role in the TNFalpha and IL-1beta signaling pathways. Mechanistically, induces the 'Lys-63'-linked polyubiquitination of MAP3K7/TAK1 component leading to the activation of NF-kappa-B. Also modulates STAT3 activity through negative regulation of PIAS3, either by degradation of PIAS3 through the ubiquitin-proteasome pathway or exclusion of PIAS3 from the nucleus. Negatively regulates TLR3/4-mediated innate immune response by catalyzing 'Lys-6'- and 'Lys-33'-linked polyubiquitination of TICAM1 and thereby disrupting the TICAM1-TBK1 interaction. In Mus musculus (Mouse), this protein is E3 ubiquitin-protein ligase TRIM8 (Trim8).